Consider the following 231-residue polypeptide: MVKSMQQIAMTQQKTLDQVRTFMARTYSWMAAGLALTAGVAYLTAQNEGLAMQVASLRLPLMLAQLALVFVLSMFAQRLSAAVAGALFVGYAALTGLTFSALLFAYSPAAVITAFAVSAGTFGLMSVAGFVIKKDLSAMGRFFLFAVLGLVVAMLVNLFVGSSALSLGISMIGVFLFAGLTAYDTQMLRNLALSGISGEQAERASINGALALYLDFINIFLFLLNIGNSRD.

7 helical membrane-spanning segments follow: residues 26 to 46, 56 to 76, 84 to 104, 112 to 132, 142 to 162, 163 to 183, and 206 to 226; these read TYSW…LTAQ, SLRL…SMFA, AGAL…ALLF, ITAF…GFVI, FFLF…FVGS, SALS…LTAY, and INGA…LLNI.

Belongs to the BI1 family.

The protein localises to the cell membrane. This is an uncharacterized protein from Deinococcus radiodurans (strain ATCC 13939 / DSM 20539 / JCM 16871 / CCUG 27074 / LMG 4051 / NBRC 15346 / NCIMB 9279 / VKM B-1422 / R1).